The primary structure comprises 51 residues: Large ribosomal subunit protein eL39 (51 aa).

This sequence belongs to the eukaryotic ribosomal protein eL39 family.

This is Large ribosomal subunit protein eL39 (rpl39e) from Methanocaldococcus jannaschii (strain ATCC 43067 / DSM 2661 / JAL-1 / JCM 10045 / NBRC 100440) (Methanococcus jannaschii).